A 98-amino-acid polypeptide reads, in one-letter code: Leydig cell tumor 10 kDa protein homolog (98 aa).

2 disordered regions span residues 1–38 (MAQG…RVIA) and 73–98 (SLPK…KMPA). Low complexity predominate over residues 16-25 (SKAAAAAASA). Residues 28–38 (RGPRKGGRVIA) are compositionally biased toward basic residues. Over residues 73–83 (SLPKKLALLKA) the composition is skewed to low complexity.

The protein belongs to the UPF0390 family.

In terms of biological role, may have a potential role in hypercalcemia of malignancy. This is Leydig cell tumor 10 kDa protein homolog from Bos taurus (Bovine).